We begin with the raw amino-acid sequence, 138 residues long: Membrane glycoprotein UL139 (138 aa).

Positions 1-15 are cleaved as a signal peptide; sequence MLWILVLFALAASAS. The tract at residues 17–37 is disordered; sequence TTTGTSSNSSQSTSAGTTNTT. Residues 64-84 form a helical membrane-spanning segment; the sequence is GWTLSGLLLIFTCCLCCFWLV. Residues 113–129 are compositionally biased toward polar residues; that stretch reads SDATLPMGTTGSYTPPQ. The tract at residues 113 to 138 is disordered; that stretch reads SDATLPMGTTGSYTPPQDGSFPPPPR.

It is found in the host membrane. This Homo sapiens (Human) protein is Membrane glycoprotein UL139 (UL139).